The following is a 336-amino-acid chain: Glucokinase (336 aa).

12 to 17 contacts ATP; it reads ADIGGT.

This sequence belongs to the bacterial glucokinase family.

The protein localises to the cytoplasm. It catalyses the reaction D-glucose + ATP = D-glucose 6-phosphate + ADP + H(+). This Helicobacter pylori (strain P12) protein is Glucokinase.